Reading from the N-terminus, the 394-residue chain is Flap endonuclease 1-A (394 aa).

Residues 1–105 (MGIKGLTGLL…GVLSKRLERR (105 aa)) are N-domain. Residue Asp-34 participates in Mg(2+) binding. DNA-binding residues include Arg-47 and Arg-71. Positions 87, 159, 161, 180, and 182 each coordinate Mg(2+). The I-domain stretch occupies residues 123–254 (DVDRFSRRTV…KSALKLIREY (132 aa)). A DNA-binding site is contributed by Glu-159. Residues Gly-232 and Asp-234 each contribute to the DNA site. Asp-234 contacts Mg(2+). Residues 341-349 (QQGRLDGFF) form an interaction with PCNA region. A disordered region spans residues 356–375 (KAAAPAPVGKAKGKGKVDAK).

It belongs to the XPG/RAD2 endonuclease family. FEN1 subfamily. Interacts with PCNA. Three molecules of FEN1 bind to one PCNA trimer with each molecule binding to one PCNA monomer. PCNA stimulates the nuclease activity without altering cleavage specificity. Mg(2+) serves as cofactor. Post-translationally, phosphorylated. Phosphorylation upon DNA damage induces relocalization to the nuclear plasma.

The protein resides in the nucleus. It is found in the nucleolus. Its subcellular location is the nucleoplasm. The protein localises to the mitochondrion. Its function is as follows. Structure-specific nuclease with 5'-flap endonuclease and 5'-3' exonuclease activities involved in DNA replication and repair. During DNA replication, cleaves the 5'-overhanging flap structure that is generated by displacement synthesis when DNA polymerase encounters the 5'-end of a downstream Okazaki fragment. It enters the flap from the 5'-end and then tracks to cleave the flap base, leaving a nick for ligation. Also involved in the long patch base excision repair (LP-BER) pathway, by cleaving within the apurinic/apyrimidinic (AP) site-terminated flap. Acts as a genome stabilization factor that prevents flaps from equilibrating into structures that lead to duplications and deletions. Also possesses 5'-3' exonuclease activity on nicked or gapped double-stranded DNA, and exhibits RNase H activity. Also involved in replication and repair of rDNA and in repairing mitochondrial DNA. This Laccaria bicolor (strain S238N-H82 / ATCC MYA-4686) (Bicoloured deceiver) protein is Flap endonuclease 1-A.